The following is a 486-amino-acid chain: Protein nucleotidyltransferase YdiU (486 aa).

The ATP site is built by Gly90, Gly92, Arg93, Lys113, Asp125, Gly126, Arg176, and Arg183. Residue Asp252 is the Proton acceptor of the active site. 2 residues coordinate Mg(2+): Asn253 and Asp262. Residue Asp262 coordinates ATP.

It belongs to the SELO family. Mg(2+) is required as a cofactor. The cofactor is Mn(2+).

The enzyme catalyses L-seryl-[protein] + ATP = 3-O-(5'-adenylyl)-L-seryl-[protein] + diphosphate. It carries out the reaction L-threonyl-[protein] + ATP = 3-O-(5'-adenylyl)-L-threonyl-[protein] + diphosphate. The catalysed reaction is L-tyrosyl-[protein] + ATP = O-(5'-adenylyl)-L-tyrosyl-[protein] + diphosphate. It catalyses the reaction L-histidyl-[protein] + UTP = N(tele)-(5'-uridylyl)-L-histidyl-[protein] + diphosphate. The enzyme catalyses L-seryl-[protein] + UTP = O-(5'-uridylyl)-L-seryl-[protein] + diphosphate. It carries out the reaction L-tyrosyl-[protein] + UTP = O-(5'-uridylyl)-L-tyrosyl-[protein] + diphosphate. Its function is as follows. Nucleotidyltransferase involved in the post-translational modification of proteins. It can catalyze the addition of adenosine monophosphate (AMP) or uridine monophosphate (UMP) to a protein, resulting in modifications known as AMPylation and UMPylation. The polypeptide is Protein nucleotidyltransferase YdiU (Pseudomonas aeruginosa (strain ATCC 15692 / DSM 22644 / CIP 104116 / JCM 14847 / LMG 12228 / 1C / PRS 101 / PAO1)).